The primary structure comprises 506 residues: Ecdysteroid UDP-glucosyltransferase (506 aa).

Residues 1–18 form the signal peptide; sequence MTILCWLALLSTLTAVNA.

It belongs to the UDP-glycosyltransferase family. Post-translationally, glycosylated.

Functionally, catalyzes the transfer of glucose from UDP-glucose to ecdysteroids which are insect molting hormones. Acts on the host at the organismal level to block its development, thereby increasing the yield of progeny virus. The protein is Ecdysteroid UDP-glucosyltransferase (EGT) of Lepidoptera (butterflies and moths).